We begin with the raw amino-acid sequence, 103 residues long: Integration host factor subunit beta (103 aa).

This sequence belongs to the bacterial histone-like protein family. As to quaternary structure, heterodimer of an alpha and a beta chain.

This protein is one of the two subunits of integration host factor, a specific DNA-binding protein that functions in genetic recombination as well as in transcriptional and translational control. This Bradyrhizobium sp. (strain BTAi1 / ATCC BAA-1182) protein is Integration host factor subunit beta.